The sequence spans 159 residues: LOB domain-containing protein 25 (159 aa).

The LOB domain occupies 38–139 (SPCAACKFLR…RELEETNADL (102 aa)).

Belongs to the LOB domain-containing protein family. In terms of tissue distribution, expressed in young shoots, roots, stems, leaves and flowers.

The chain is LOB domain-containing protein 25 (LBD25) from Arabidopsis thaliana (Mouse-ear cress).